The following is a 196-amino-acid chain: Holliday junction branch migration complex subunit RuvA (196 aa).

The domain I stretch occupies residues 1–64; that stretch reads MIDRLRGQLV…EDAMLLFGFA (64 aa). A domain II region spans residues 65–143; sequence TREEREAFDA…AAAGGGGGVA (79 aa). Residues 144 to 153 are flexible linker; sequence AGEGDGPFME. The interval 153 to 196 is domain III; it reads EAREALTGLGYSLEEAERALRDVPPQETVEQYIKAALRKIGGRR.

Belongs to the RuvA family. As to quaternary structure, homotetramer. Forms an RuvA(8)-RuvB(12)-Holliday junction (HJ) complex. HJ DNA is sandwiched between 2 RuvA tetramers; dsDNA enters through RuvA and exits via RuvB. An RuvB hexamer assembles on each DNA strand where it exits the tetramer. Each RuvB hexamer is contacted by two RuvA subunits (via domain III) on 2 adjacent RuvB subunits; this complex drives branch migration. In the full resolvosome a probable DNA-RuvA(4)-RuvB(12)-RuvC(2) complex forms which resolves the HJ.

Its subcellular location is the cytoplasm. The RuvA-RuvB-RuvC complex processes Holliday junction (HJ) DNA during genetic recombination and DNA repair, while the RuvA-RuvB complex plays an important role in the rescue of blocked DNA replication forks via replication fork reversal (RFR). RuvA specifically binds to HJ cruciform DNA, conferring on it an open structure. The RuvB hexamer acts as an ATP-dependent pump, pulling dsDNA into and through the RuvAB complex. HJ branch migration allows RuvC to scan DNA until it finds its consensus sequence, where it cleaves and resolves the cruciform DNA. In Rubrobacter xylanophilus (strain DSM 9941 / JCM 11954 / NBRC 16129 / PRD-1), this protein is Holliday junction branch migration complex subunit RuvA.